Reading from the N-terminus, the 261-residue chain is Small ribosomal subunit protein uS2 (261 aa).

N-acetylserine is present on S2. Residues 214-261 (ATEDIKTDDVEEAPAADAETEWTGETEEVDWAESGATPAAEEAAASNW) form a disordered region. A compositionally biased stretch (acidic residues) spans 222–244 (DVEEAPAADAETEWTGETEEVDW). A compositionally biased stretch (low complexity) spans 245–261 (AESGATPAAEEAAASNW).

This sequence belongs to the universal ribosomal protein uS2 family. In terms of assembly, component of the small ribosomal subunit. Mature ribosomes consist of a small (40S) and a large (60S) subunit. The 40S subunit contains about 33 different proteins and 1 molecule of RNA (18S). The 60S subunit contains about 49 different proteins and 3 molecules of RNA (25S, 5.8S and 5S). Interacts with RPS21.

It localises to the cytoplasm. In terms of biological role, required for the assembly and/or stability of the 40S ribosomal subunit. Required for the processing of the 20S rRNA-precursor to mature 18S rRNA in a late step of the maturation of 40S ribosomal subunits. The polypeptide is Small ribosomal subunit protein uS2 (Debaryomyces hansenii (strain ATCC 36239 / CBS 767 / BCRC 21394 / JCM 1990 / NBRC 0083 / IGC 2968) (Yeast)).